The chain runs to 544 residues: Hydroxylamine reductase (544 aa).

The [4Fe-4S] cluster site is built by Cys-3, Cys-6, Cys-15, and Cys-21. Residues His-244, Glu-268, Cys-313, Cys-400, Cys-428, Cys-453, Glu-487, and Lys-489 each coordinate hybrid [4Fe-2O-2S] cluster. Cys-400 carries the post-translational modification Cysteine persulfide.

This sequence belongs to the HCP family. Requires [4Fe-4S] cluster as cofactor. Hybrid [4Fe-2O-2S] cluster serves as cofactor.

It is found in the cytoplasm. It catalyses the reaction A + NH4(+) + H2O = hydroxylamine + AH2 + H(+). Functionally, catalyzes the reduction of hydroxylamine to form NH(3) and H(2)O. This chain is Hydroxylamine reductase, found in Trichormus variabilis (strain ATCC 29413 / PCC 7937) (Anabaena variabilis).